We begin with the raw amino-acid sequence, 191 residues long: Pyridoxal 5'-phosphate synthase subunit PdxT (191 aa).

48–50 (GES) is an L-glutamine binding site. Cys79 functions as the Nucleophile in the catalytic mechanism. L-glutamine is bound by residues Arg106 and 134–135 (IR). Catalysis depends on charge relay system residues His170 and Glu172.

Belongs to the glutaminase PdxT/SNO family. In the presence of PdxS, forms a dodecamer of heterodimers. Only shows activity in the heterodimer.

It catalyses the reaction aldehydo-D-ribose 5-phosphate + D-glyceraldehyde 3-phosphate + L-glutamine = pyridoxal 5'-phosphate + L-glutamate + phosphate + 3 H2O + H(+). The enzyme catalyses L-glutamine + H2O = L-glutamate + NH4(+). The protein operates within cofactor biosynthesis; pyridoxal 5'-phosphate biosynthesis. Functionally, catalyzes the hydrolysis of glutamine to glutamate and ammonia as part of the biosynthesis of pyridoxal 5'-phosphate. The resulting ammonia molecule is channeled to the active site of PdxS. The sequence is that of Pyridoxal 5'-phosphate synthase subunit PdxT from Oenococcus oeni (strain ATCC BAA-331 / PSU-1).